We begin with the raw amino-acid sequence, 219 residues long: Large ribosomal subunit protein uL1 (219 aa).

It belongs to the universal ribosomal protein uL1 family. Part of the 50S ribosomal subunit.

In terms of biological role, probably involved in E site tRNA release. Binds directly to 23S rRNA. Protein L1 is also a translational repressor protein, it controls the translation of its operon by binding to its mRNA. In Methanocaldococcus jannaschii (strain ATCC 43067 / DSM 2661 / JAL-1 / JCM 10045 / NBRC 100440) (Methanococcus jannaschii), this protein is Large ribosomal subunit protein uL1.